The sequence spans 397 residues: uncharacterized protein (397 aa).

This is an uncharacterized protein from Methanocaldococcus jannaschii (strain ATCC 43067 / DSM 2661 / JAL-1 / JCM 10045 / NBRC 100440) (Methanococcus jannaschii).